Here is a 436-residue protein sequence, read N- to C-terminus: Adenylosuccinate synthetase (436 aa).

Residues 22–28 (GDEGKGK) and 50–52 (GHE) contribute to the GTP site. Residue Asp-23 is the Proton acceptor of the active site. The Mg(2+) site is built by Asp-23 and Gly-50. IMP contacts are provided by residues 23 to 26 (DEGK), 48 to 51 (NAGH), Thr-141, Arg-155, Asn-231, Thr-246, and Arg-310. His-51 functions as the Proton donor in the catalytic mechanism. Residue 306–312 (VSTARVR) participates in substrate binding. Residues Arg-312, 338–340 (KMD), and 424–426 (GVG) contribute to the GTP site.

This sequence belongs to the adenylosuccinate synthetase family. Homodimer. It depends on Mg(2+) as a cofactor.

It localises to the cytoplasm. The enzyme catalyses IMP + L-aspartate + GTP = N(6)-(1,2-dicarboxyethyl)-AMP + GDP + phosphate + 2 H(+). It participates in purine metabolism; AMP biosynthesis via de novo pathway; AMP from IMP: step 1/2. Its function is as follows. Plays an important role in the salvage pathway for purine nucleotide biosynthesis. Catalyzes the first committed step in the biosynthesis of AMP from IMP. This chain is Adenylosuccinate synthetase, found in Babesia bovis.